Consider the following 350-residue polypeptide: S-adenosylmethionine:tRNA ribosyltransferase-isomerase (350 aa).

It belongs to the QueA family. Monomer.

It is found in the cytoplasm. The enzyme catalyses 7-aminomethyl-7-carbaguanosine(34) in tRNA + S-adenosyl-L-methionine = epoxyqueuosine(34) in tRNA + adenine + L-methionine + 2 H(+). It participates in tRNA modification; tRNA-queuosine biosynthesis. In terms of biological role, transfers and isomerizes the ribose moiety from AdoMet to the 7-aminomethyl group of 7-deazaguanine (preQ1-tRNA) to give epoxyqueuosine (oQ-tRNA). The polypeptide is S-adenosylmethionine:tRNA ribosyltransferase-isomerase (Vibrio campbellii (strain ATCC BAA-1116)).